The following is a 1198-amino-acid chain: Fibronectin type-III domain-containing protein 3A (1198 aa).

Residues 188–201 (KKLKDRQGTQKDKM) are compositionally biased toward basic and acidic residues. The interval 188-257 (KKLKDRQGTQ…VDPEMEEKDE (70 aa)) is disordered. Phosphoserine is present on residues serine 203, serine 207, and serine 213. 9 Fibronectin type-III domains span residues 268 to 369 (NIVK…TLSC), 373 to 465 (PPNA…TSGC), 469 to 562 (VPAS…TCPD), 566 to 660 (VPVK…TPAV), 664 to 757 (PCLP…TAPG), 761 to 851 (QCRP…TPPS), 863 to 950 (SDDD…TKPL), 951 to 1045 (PPDP…TPKS), and 1049 to 1151 (ALKA…TEPP). Lysine 384 carries the N6-acetyllysine modification. Residues 1177-1197 (ILVVFAFFSILIAFIIQYFVI) form a helical membrane-spanning segment.

It belongs to the FNDC3 family. As to expression, testis. Localizes to the acrosome of spermatids, as well as to Leydig cells. Can be detected on the acrosome beginning at steps 2-3 and continuing until step 12 of spermiogenesis.

It localises to the golgi apparatus membrane. Functionally, mediates spermatid-Sertoli adhesion during spermatogenesis. The chain is Fibronectin type-III domain-containing protein 3A (Fndc3a) from Mus musculus (Mouse).